The chain runs to 251 residues: CDP-diacylglycerol pyrophosphatase (251 aa).

The chain crosses the membrane as a helical span at residues 4–24; sequence AGLLFLVMIVIAVVASGIGYW.

This sequence belongs to the Cdh family.

It is found in the cell inner membrane. It catalyses the reaction a CDP-1,2-diacyl-sn-glycerol + H2O = a 1,2-diacyl-sn-glycero-3-phosphate + CMP + 2 H(+). It participates in phospholipid metabolism; CDP-diacylglycerol degradation; phosphatidate from CDP-diacylglycerol: step 1/1. This chain is CDP-diacylglycerol pyrophosphatase, found in Escherichia coli O8 (strain IAI1).